The following is a 732-amino-acid chain: Polyphosphate kinase (732 aa).

Asn-61 serves as a coordination point for ATP. The Mg(2+) site is built by Arg-417 and Arg-447. Residue His-477 is the Phosphohistidine intermediate of the active site. 3 residues coordinate ATP: Tyr-510, Arg-606, and His-634. The segment at 699–718 is disordered; it reads DGTYRQRQPAPGEAERGTHS.

The protein belongs to the polyphosphate kinase 1 (PPK1) family. It depends on Mg(2+) as a cofactor. Post-translationally, an intermediate of this reaction is the autophosphorylated ppk in which a phosphate is covalently linked to a histidine residue through a N-P bond.

The catalysed reaction is [phosphate](n) + ATP = [phosphate](n+1) + ADP. Its function is as follows. Catalyzes the reversible transfer of the terminal phosphate of ATP to form a long-chain polyphosphate (polyP). In Thermosynechococcus vestitus (strain NIES-2133 / IAM M-273 / BP-1), this protein is Polyphosphate kinase.